A 187-amino-acid chain; its full sequence is Abscisic acid receptor PYL9 (187 aa).

The tract at residues 27–178 (HLCRENQCTS…NLKSLADVSE (152 aa)) is START-like. 2 disulfide bridges follow: Cys-29–Cys-159 and Cys-34–Cys-159. Abscisate-binding positions include Lys-63, 91 to 96 (ATTSTE), 118 to 124 (RLKNYSS), and Glu-143. Residues 87-91 (SGLPA) carry the Gate loop motif. A Latch loop motif is present at residues 117–119 (HRL).

The protein belongs to the PYR/PYL/RCAR abscisic acid intracellular receptor family. Homodimer. Monomer. Binds ABA on one subunit only. Binds to CARs protein in an ABA-independent manner, both at the plasma membrane and in the nucleus. Binds specifically (+)-ABA but not (-)-ABA. Interacts with HAB1, ABI1 and ABI2, and possibly with other PP2Cs. Interacts with TOPP1. Interacts with DDA1. As to expression, expressed in root tips, vascular tissues, stomata, flowers, pollen tubes and developing seeds.

The protein resides in the cytoplasm. It localises to the nucleus. Its subcellular location is the cell membrane. Its function is as follows. Receptor for abscisic acid (ABA) required for ABA-mediated responses such as stomatal closure and germination inhibition. Inhibits the activity of group-A protein phosphatases type 2C (PP2Cs) in an ABA-independent manner but more efficiently when activated by ABA. Confers enhanced sensitivity to ABA. Can be activated only by (+)-ABA but not by (-)-ABA. This is Abscisic acid receptor PYL9 (PYL9) from Arabidopsis thaliana (Mouse-ear cress).